The sequence spans 574 residues: Sorting nexin-33 (574 aa).

One can recognise an SH3 domain in the interval 1 to 61 (MALKGRALYD…PASYVEIVRS (61 aa)). The tract at residues 68–119 (ADYSSSPAGSPGAQVSLYNSPSVASPARSGGGSGFLSNQGSFEEDDDDDWDD) is disordered. A phosphoserine mark is found at Ser77 and Ser92. Over residues 109–119 (FEEDDDDDWDD) the composition is skewed to acidic residues. One can recognise a PX domain in the interval 230-340 (FACSVEDPTK…HFLSCLDDKQ (111 aa)). Positions 371 to 574 (LQDVEDRVDT…EKTLRMYDNL (204 aa)) constitute a BAR domain.

Belongs to the sorting nexin family. In terms of assembly, homodimer (via BAR domain). Interacts with ADAM15. Interacts with FASLG. Interacts (via SH3 domain) with DNM1 and DNM2. Interacts with WASL. Interacts with FCHSD1 (via the F-BAR domain). Post-translationally, phosphorylated. As to expression, detected in heart and pancreas.

Its subcellular location is the cytoplasm. The protein localises to the cytosol. It is found in the membrane. It localises to the cytoplasmic vesicle membrane. Functionally, plays a role in the reorganization of the cytoskeleton, endocytosis and cellular vesicle trafficking via its interactions with membranes, WASL, DNM1 and DNM2. Acts both during interphase and at the end of mitotic cell divisions. Required for efficient progress through mitosis and cytokinesis. Required for normal formation of the cleavage furrow at the end of mitosis. Modulates endocytosis of cell-surface proteins, such as APP and PRNP; this then modulates the secretion of APP and PRNP peptides. Promotes membrane tubulation (in vitro). May promote the formation of macropinosomes. This is Sorting nexin-33 (SNX33) from Homo sapiens (Human).